Reading from the N-terminus, the 552-residue chain is Protein FAM234A (552 aa).

At 1–48 (MTDGKDLEAEIHPLKSENRKVPENAGALAGKEPRGTPAPQTRLSHCRT) the chain is on the cytoplasmic side. The chain crosses the membrane as a helical; Signal-anchor for type II membrane protein span at residues 49-69 (AAFFLSLFACLLVVFVVSFII). Over 70 to 552 (PCPDRPALQG…LSRLRYRSEA (483 aa)) the chain is Extracellular. Residues asparagine 115, asparagine 238, and asparagine 473 are each glycosylated (N-linked (GlcNAc...) asparagine).

The protein belongs to the FAM234 family.

The protein resides in the membrane. This chain is Protein FAM234A (FAM234A), found in Bos taurus (Bovine).